Here is a 401-residue protein sequence, read N- to C-terminus: Enoyl-[acyl-carrier-protein] reductase [NADH] (401 aa).

NAD(+)-binding positions include 48-53 (GASSGY), 74-75 (FE), 111-112 (DA), and 140-141 (LA). Tyr226 serves as a coordination point for substrate. Tyr236 (proton donor) is an active-site residue. NAD(+) contacts are provided by residues Lys245 and 274–276 (VVT).

The protein belongs to the TER reductase family. As to quaternary structure, monomer.

It carries out the reaction a 2,3-saturated acyl-[ACP] + NAD(+) = a (2E)-enoyl-[ACP] + NADH + H(+). The protein operates within lipid metabolism; fatty acid biosynthesis. Involved in the final reduction of the elongation cycle of fatty acid synthesis (FAS II). Catalyzes the reduction of a carbon-carbon double bond in an enoyl moiety that is covalently linked to an acyl carrier protein (ACP). The sequence is that of Enoyl-[acyl-carrier-protein] reductase [NADH] from Xylella fastidiosa (strain 9a5c).